The following is a 216-amino-acid chain: UPF0548 protein (216 aa).

The protein belongs to the UPF0548 family.

This Dictyostelium discoideum (Social amoeba) protein is UPF0548 protein.